The chain runs to 436 residues: GTPase Obg (436 aa).

Residues 1–159 (MAFVDQATIE…LKVKLELRVL (159 aa)) form the Obg domain. An OBG-type G domain is found at 160 to 335 (ADVGLVGFPS…LLLKVADLLD (176 aa)). Residues 166 to 173 (GFPSAGKS), 191 to 195 (FTTID), 213 to 216 (DLPG), 285 to 288 (TKMD), and 316 to 318 (SSV) contribute to the GTP site. Mg(2+) is bound by residues Ser173 and Thr193. One can recognise an OCT domain in the interval 357-436 (KDDHQSTDFQ…GADFAFEFEE (80 aa)).

This sequence belongs to the TRAFAC class OBG-HflX-like GTPase superfamily. OBG GTPase family. Monomer. Mg(2+) is required as a cofactor.

The protein localises to the cytoplasm. In terms of biological role, an essential GTPase which binds GTP, GDP and possibly (p)ppGpp with moderate affinity, with high nucleotide exchange rates and a fairly low GTP hydrolysis rate. Plays a role in control of the cell cycle, stress response, ribosome biogenesis and in those bacteria that undergo differentiation, in morphogenesis control. The polypeptide is GTPase Obg (Oenococcus oeni (strain ATCC BAA-331 / PSU-1)).